Reading from the N-terminus, the 202-residue chain is Sterile alpha motif domain-containing protein 10 (202 aa).

Residues 118–184 (WSQQDVCKWL…LQQVLRLQVR (67 aa)) enclose the SAM domain.

The polypeptide is Sterile alpha motif domain-containing protein 10 (SAMD10) (Homo sapiens (Human)).